Consider the following 151-residue polypeptide: UPF0756 membrane protein HS_0993 (151 aa).

Helical transmembrane passes span 1–21 (MSLQ…LGVL), 52–72 (YGVN…IVSG), 81–101 (ALIH…AWFG), and 123–143 (ILGV…AGIL).

This sequence belongs to the UPF0756 family.

The protein resides in the cell membrane. The protein is UPF0756 membrane protein HS_0993 of Histophilus somni (strain 129Pt) (Haemophilus somnus).